The sequence spans 139 residues: uncharacterized protein (139 aa).

This is an uncharacterized protein from Sinorhizobium fredii (strain NBRC 101917 / NGR234).